The sequence spans 810 residues: Leucine--tRNA ligase (810 aa).

Positions Pro-43 to His-53 match the 'HIGH' region motif. The 'KMSKS' region motif lies at Lys-578 to Ser-582. Lys-581 is an ATP binding site.

Belongs to the class-I aminoacyl-tRNA synthetase family.

It is found in the cytoplasm. It carries out the reaction tRNA(Leu) + L-leucine + ATP = L-leucyl-tRNA(Leu) + AMP + diphosphate. The polypeptide is Leucine--tRNA ligase (Solibacter usitatus (strain Ellin6076)).